The following is a 249-amino-acid chain: Diaminopimelate epimerase (249 aa).

Substrate is bound by residues Asn11 and Asn60. Catalysis depends on Cys69, which acts as the Proton donor. Substrate-binding positions include 70–71 (GN), Asn164, and 182–183 (ER). The active-site Proton acceptor is the Cys192. 193 to 194 (GT) contributes to the substrate binding site.

Belongs to the diaminopimelate epimerase family. Homodimer.

Its subcellular location is the cytoplasm. It carries out the reaction (2S,6S)-2,6-diaminopimelate = meso-2,6-diaminopimelate. Its pathway is amino-acid biosynthesis; L-lysine biosynthesis via DAP pathway; DL-2,6-diaminopimelate from LL-2,6-diaminopimelate: step 1/1. Its function is as follows. Catalyzes the stereoinversion of LL-2,6-diaminopimelate (L,L-DAP) to meso-diaminopimelate (meso-DAP), a precursor of L-lysine and an essential component of the bacterial peptidoglycan. This chain is Diaminopimelate epimerase, found in Campylobacter jejuni subsp. jejuni serotype O:2 (strain ATCC 700819 / NCTC 11168).